The primary structure comprises 122 residues: MPAARQQRGAAVEAAARALLEQAGLRLVVGNANYRGGELDLVMRDGPALVFVEVRYRRDDRFGGGAASVDWRKRRKLVLAAQLFLGAHPTLAALPCRFDVVDASGEPPVLHWIRDAFRADDC.

Belongs to the UPF0102 family.

This Xanthomonas euvesicatoria pv. vesicatoria (strain 85-10) (Xanthomonas campestris pv. vesicatoria) protein is UPF0102 protein XCV0816.